Reading from the N-terminus, the 160-residue chain is 6,7-dimethyl-8-ribityllumazine synthase (160 aa).

5-amino-6-(D-ribitylamino)uracil contacts are provided by residues tryptophan 27, 59–61 (AIE), and 81–83 (VVI). Residue 86-87 (QT) participates in (2S)-2-hydroxy-3-oxobutyl phosphate binding. Histidine 89 acts as the Proton donor in catalysis. Asparagine 114 contacts 5-amino-6-(D-ribitylamino)uracil. Arginine 128 is a binding site for (2S)-2-hydroxy-3-oxobutyl phosphate.

The protein belongs to the DMRL synthase family. Homopentamer.

The catalysed reaction is (2S)-2-hydroxy-3-oxobutyl phosphate + 5-amino-6-(D-ribitylamino)uracil = 6,7-dimethyl-8-(1-D-ribityl)lumazine + phosphate + 2 H2O + H(+). Its pathway is cofactor biosynthesis; riboflavin biosynthesis; riboflavin from 2-hydroxy-3-oxobutyl phosphate and 5-amino-6-(D-ribitylamino)uracil: step 1/2. In terms of biological role, catalyzes the formation of 6,7-dimethyl-8-ribityllumazine by condensation of 5-amino-6-(D-ribitylamino)uracil with 3,4-dihydroxy-2-butanone 4-phosphate. This is the penultimate step in the biosynthesis of riboflavin. The sequence is that of 6,7-dimethyl-8-ribityllumazine synthase from Mycobacterium sp. (strain JLS).